We begin with the raw amino-acid sequence, 557 residues long: Urease subunit alpha (557 aa).

A Urease domain is found at 130–557 (GFIDTHIHWV…LPLTQLYFIY (428 aa)). Ni(2+) contacts are provided by histidine 135, histidine 137, and lysine 217. Lysine 217 is modified (N6-carboxylysine). Residue histidine 219 coordinates substrate. The Ni(2+) site is built by histidine 246 and histidine 272. Histidine 320 functions as the Proton donor in the catalytic mechanism. Residue aspartate 360 participates in Ni(2+) binding.

This sequence belongs to the metallo-dependent hydrolases superfamily. Urease alpha subunit family. In terms of assembly, heterohexamer of 3 UreC (alpha) and 3 UreAB (gamma/beta) subunits. Requires Ni cation as cofactor. Post-translationally, carboxylation allows a single lysine to coordinate two nickel ions.

The protein localises to the cytoplasm. It carries out the reaction urea + 2 H2O + H(+) = hydrogencarbonate + 2 NH4(+). The protein operates within nitrogen metabolism; urea degradation; CO(2) and NH(3) from urea (urease route): step 1/1. The sequence is that of Urease subunit alpha from Sulfurisphaera tokodaii (strain DSM 16993 / JCM 10545 / NBRC 100140 / 7) (Sulfolobus tokodaii).